The following is a 195-amino-acid chain: MAFMLSLLMALVLVSYGLGGSLGCYLSENHMLHAQKNLKLLARMNRLSPHSCLQDRKDFGLPRKMVEGSQLQKDQAISVLHEMLQQCFNLFHTERSSAAWDNTLLEQLCTGLHQQLDDLDARLGPLMGQKDSGMGRMGPILTVKKYFQGIHVYLKEKKYSDCAWEVIRVEMMRALSSSTTLQERLKKMGGNLNSP.

The N-terminal stretch at 1-23 (MAFMLSLLMALVLVSYGLGGSLG) is a signal peptide. 2 cysteine pairs are disulfide-bonded: Cys52–Cys162 and Cys87–Cys109.

This sequence belongs to the alpha/beta interferon family. IFN-alphaII subfamily.

It is found in the secreted. In terms of biological role, paracrine hormone primarily responsible for maternal recognition of pregnancy. Interacts with endometrial receptors, probably type I interferon receptors, and blocks estrogen receptor expression, preventing the estrogen-induced increase in oxytocin receptor expression in the endometrium. This results in the suppression of the pulsatile endometrial release of the luteolytic hormone prostaglandin F2-alpha, hindering the regression of the corpus luteum (luteolysis) and therefore a return to ovarian cyclicity. This, and a possible direct effect of IFN-tau on prostaglandin synthesis, leads in turn to continued ovarian progesterone secretion, which stimulates the secretion by the endometrium of the nutrients required for the growth of the conceptus. In summary, displays particularly high antiviral and antiproliferative potency concurrently with particular weak cytotoxicity, high antiluteolytic activity and immunomodulatory properties. In contrast with other IFNs, IFN-tau is not virally inducible. The chain is Interferon tau (IFNT) from Giraffa camelopardalis (Giraffe).